Reading from the N-terminus, the 509-residue chain is Probable cation transporter HKT2;3 (509 aa).

The Cytoplasmic portion of the chain corresponds to 1-32 (MPIRLHIFVNSARHAINSSAFICRFIAYHLSP). Transmembrane regions (helical) follow at residues 33 to 53 (LLIH…SLVV) and 96 to 116 (ILTL…GLVL). The Cytoplasmic segment spans residues 117 to 164 (ESSKQNKHDPENRRVSSVTVCKQSQLEEATPQTPSMNSIDIKKRCLKY). The next 2 helical transmembrane spans lie at 165 to 185 (LVFV…LLVF) and 237 to 257 (GLLL…PVFL). At 258 to 296 (RLVIWALRGLRLAKAEEPDFMMNNSSAVGFSHLLPNLQT) the chain is on the cytoplasmic side. Transmembrane regions (helical) follow at residues 297-317 (IFLA…FCCL) and 353-373 (CSLV…TPSL). Over 374–400 (TKLFSACQDHKRIGPESDDRTSKGKPF) the chain is Cytoplasmic. Transmembrane regions (helical) follow at residues 401-421 (LKMM…LVCI) and 474-494 (AYNF…LAML). Topologically, residues 495–509 (CGRLNSKDSTSARTR) are cytoplasmic.

Belongs to the TrkH potassium transport family. HKT (TC 2.A.38.3) subfamily.

The protein resides in the membrane. Probable cation transporter. May be involved in regulation of potassium-sodium homeostasis. This chain is Probable cation transporter HKT2;3, found in Oryza sativa subsp. japonica (Rice).